The primary structure comprises 413 residues: Protein esc1 (413 aa).

The span at 1–22 (MSSYALPSMQPTPTSSIPLRQM) shows a compositional bias: polar residues. 2 disordered regions span residues 1–202 (MSSY…NQPS) and 230–265 (MYVPQQQTSHSSGASYQNESANPPVQSPMQYSYSQG). Over residues 23–42 (SQPTTSAPSNSASSTPYSPQ) the composition is skewed to low complexity. A compositionally biased stretch (polar residues) spans 43–63 (QVPLTHNSYPLSTPSSFQHGQ). 2 stretches are compositionally biased toward low complexity: residues 86 to 103 (SAAPASSSPTSATLSTAA) and 116 to 126 (SSSSYVYSVPP). Positions 127 to 136 (TNSTTSQASA) are enriched in polar residues. Positions 150–197 (STTLTPSTTDSSSTDVSSSDSVSTSASSSNASNTVSVTSPASSSATPL) are enriched in low complexity. Positions 334–385 (ELRTSHKLAERKRRKEIKELFDDLKDALPLDKSTKSSKWGLLTRAIQYIEQL) constitute a bHLH domain.

Efficient DNA binding requires dimerization with another bHLH protein.

The protein resides in the nucleus. Functionally, involved in the sexual differentiation process. Modulate the ability of the cell to differentiate in response to the nitrogen starvation signal; in particular in response to decreases in the level of cellular cAMP. The sequence is that of Protein esc1 (esc1) from Schizosaccharomyces pombe (strain 972 / ATCC 24843) (Fission yeast).